Here is a 200-residue protein sequence, read N- to C-terminus: Large ribosomal subunit protein uL4 (200 aa).

Residues 43 to 72 are disordered; sequence RAQKTRAEVSGSGKKPWRQKGTGRARSGDI.

Belongs to the universal ribosomal protein uL4 family. Part of the 50S ribosomal subunit.

In terms of biological role, one of the primary rRNA binding proteins, this protein initially binds near the 5'-end of the 23S rRNA. It is important during the early stages of 50S assembly. It makes multiple contacts with different domains of the 23S rRNA in the assembled 50S subunit and ribosome. Its function is as follows. Forms part of the polypeptide exit tunnel. The chain is Large ribosomal subunit protein uL4 from Haemophilus ducreyi (strain 35000HP / ATCC 700724).